The sequence spans 211 residues: ATP phosphoribosyltransferase (211 aa).

Belongs to the ATP phosphoribosyltransferase family. Short subfamily. In terms of assembly, heteromultimer composed of HisG and HisZ subunits.

The protein localises to the cytoplasm. The catalysed reaction is 1-(5-phospho-beta-D-ribosyl)-ATP + diphosphate = 5-phospho-alpha-D-ribose 1-diphosphate + ATP. The protein operates within amino-acid biosynthesis; L-histidine biosynthesis; L-histidine from 5-phospho-alpha-D-ribose 1-diphosphate: step 1/9. Functionally, catalyzes the condensation of ATP and 5-phosphoribose 1-diphosphate to form N'-(5'-phosphoribosyl)-ATP (PR-ATP). Has a crucial role in the pathway because the rate of histidine biosynthesis seems to be controlled primarily by regulation of HisG enzymatic activity. This is ATP phosphoribosyltransferase from Rippkaea orientalis (strain PCC 8801 / RF-1) (Cyanothece sp. (strain PCC 8801)).